The chain runs to 166 residues: 3-hydroxyacyl-[acyl-carrier-protein] dehydratase, mitochondrial (166 aa).

The N-terminal 17 residues, 1–17, are a transit peptide targeting the mitochondrion; it reads MLAKTVFPRGLLVLRSF. The MaoC-like domain occupies 34-125; sequence ETRVFSSEDI…VQAIALRETK (92 aa).

In terms of assembly, homodimer. Expressed in leaves, roots, siliques and flowers.

The protein localises to the mitochondrion. The enzyme catalyses a (3R)-hydroxyacyl-[ACP] = a (2E)-enoyl-[ACP] + H2O. The catalysed reaction is (3R)-hydroxyhexadecanoyl-[ACP] = (2E)-hexadecenoyl-[ACP] + H2O. It catalyses the reaction (3R)-hydroxydecanoyl-[ACP] = (2E)-decenoyl-[ACP] + H2O. It functions in the pathway lipid metabolism; fatty acid biosynthesis. Functionally, 3-hydroxyl-[acyl-carrier-protein] (3-hydroxyl-ACP) dehydratase required for mitochondrial fatty acid synthesis (mtFAS). MtFAS are essential for photorespiration and plant development, probably by influencing mitochondrial membrane lipid composition and other lipid metabolic pathways. This chain is 3-hydroxyacyl-[acyl-carrier-protein] dehydratase, mitochondrial, found in Arabidopsis thaliana (Mouse-ear cress).